A 177-amino-acid chain; its full sequence is ATP synthase subunit delta (177 aa).

This sequence belongs to the ATPase delta chain family. As to quaternary structure, F-type ATPases have 2 components, F(1) - the catalytic core - and F(0) - the membrane proton channel. F(1) has five subunits: alpha(3), beta(3), gamma(1), delta(1), epsilon(1). F(0) has three main subunits: a(1), b(2) and c(10-14). The alpha and beta chains form an alternating ring which encloses part of the gamma chain. F(1) is attached to F(0) by a central stalk formed by the gamma and epsilon chains, while a peripheral stalk is formed by the delta and b chains.

It localises to the cell inner membrane. In terms of biological role, f(1)F(0) ATP synthase produces ATP from ADP in the presence of a proton or sodium gradient. F-type ATPases consist of two structural domains, F(1) containing the extramembraneous catalytic core and F(0) containing the membrane proton channel, linked together by a central stalk and a peripheral stalk. During catalysis, ATP synthesis in the catalytic domain of F(1) is coupled via a rotary mechanism of the central stalk subunits to proton translocation. Its function is as follows. This protein is part of the stalk that links CF(0) to CF(1). It either transmits conformational changes from CF(0) to CF(1) or is implicated in proton conduction. This chain is ATP synthase subunit delta, found in Neisseria gonorrhoeae (strain ATCC 700825 / FA 1090).